Consider the following 156-residue polypeptide: MDINITLIGQMITFAIFVGFTMKFVWPPLRKALDERREKIAEGLASADRASRELEVAKRQSAEILREAKAKATEIVENAYVRAHKVDEQAKEEAIAAADKIKSMAMAEIEQEKVKAKEELKHEVVSLAMAAASKIISANVDEQSSKKILKDFVEKV.

Residues 5 to 27 (ITLIGQMITFAIFVGFTMKFVWP) traverse the membrane as a helical segment.

It belongs to the ATPase B chain family. In terms of assembly, F-type ATPases have 2 components, F(1) - the catalytic core - and F(0) - the membrane proton channel. F(1) has five subunits: alpha(3), beta(3), gamma(1), delta(1), epsilon(1). F(0) has three main subunits: a(1), b(2) and c(10-14). The alpha and beta chains form an alternating ring which encloses part of the gamma chain. F(1) is attached to F(0) by a central stalk formed by the gamma and epsilon chains, while a peripheral stalk is formed by the delta and b chains.

It localises to the cell inner membrane. F(1)F(0) ATP synthase produces ATP from ADP in the presence of a proton or sodium gradient. F-type ATPases consist of two structural domains, F(1) containing the extramembraneous catalytic core and F(0) containing the membrane proton channel, linked together by a central stalk and a peripheral stalk. During catalysis, ATP synthesis in the catalytic domain of F(1) is coupled via a rotary mechanism of the central stalk subunits to proton translocation. Its function is as follows. Component of the F(0) channel, it forms part of the peripheral stalk, linking F(1) to F(0). In Francisella philomiragia subsp. philomiragia (strain ATCC 25017 / CCUG 19701 / FSC 153 / O#319-036), this protein is ATP synthase subunit b.